The following is a 446-amino-acid chain: Exodeoxyribonuclease 7 large subunit (446 aa).

This sequence belongs to the XseA family. In terms of assembly, heterooligomer composed of large and small subunits.

The protein resides in the cytoplasm. It catalyses the reaction Exonucleolytic cleavage in either 5'- to 3'- or 3'- to 5'-direction to yield nucleoside 5'-phosphates.. Its function is as follows. Bidirectionally degrades single-stranded DNA into large acid-insoluble oligonucleotides, which are then degraded further into small acid-soluble oligonucleotides. The sequence is that of Exodeoxyribonuclease 7 large subunit from Streptococcus thermophilus (strain ATCC BAA-250 / LMG 18311).